The chain runs to 290 residues: Agmatinase (290 aa).

Histidine 112, aspartate 135, histidine 137, aspartate 139, aspartate 216, and aspartate 218 together coordinate Mn(2+).

This sequence belongs to the arginase family. Agmatinase subfamily. Requires Mn(2+) as cofactor.

It carries out the reaction agmatine + H2O = urea + putrescine. Its pathway is amine and polyamine biosynthesis; putrescine biosynthesis via agmatine pathway; putrescine from agmatine: step 1/1. Catalyzes the formation of putrescine from agmatine. This Bacillus anthracis protein is Agmatinase (speB).